A 300-amino-acid polypeptide reads, in one-letter code: O-methyltransferase phiE (300 aa).

Residues 130-131 (DL) and 157-158 (DV) each bind S-adenosyl-L-methionine.

Belongs to the class I-like SAM-binding methyltransferase superfamily. Homodimer.

The enzyme catalyses phomoidride A + S-adenosyl-L-methionine = (-)-phomoidride B + methanol + S-adenosyl-L-homocysteine + H(+). It participates in secondary metabolite biosynthesis. Its function is as follows. O-methyltransferase; part of the gene cluster that mediates the biosynthesis of the antihypercholesterolemic agents phomoidrides which are dimeric anhydrides. Within the pathway, phiE catalyzes the acetalization reaction that converts phomoidride A to phomoidride B. The pathway begins with the highly reducing polyketide synthase phiA that catalyzes the formation of a C12-fatty acyl-ACP, starting from one acetate and 5 malonate units. The hydrolase phiM is involved in the release of the C12-fatty acyl chain from phiA. The alkylcitrate synthase (ACS) phiJ and the alkylcitrate dehydratase (ACDH) phiI then give rise to decarboxylated monomeric anhydrides by coupling the C12-fatty acyl chain with oxalacetic acid. The cyclase phiC is responsible for the dimerization of the monomeric anhydrides which leads to the production of prephomoidride that contains the characteristic bicyclo[4.3.1]deca-1,6-diene system of phomoidrides. Iterative oxidation catalyzed by the alpha-ketoglutarate-dependent dioxygenase phiK produced then phomoidride A. Finally, the methyltransferase phiE converts phomoidride A to phomoidride B via an acetalization reaction. The phosphatidylethanolamine-binding protein phiB and phiN are not essential for dimerization and their functions have still to be determined. This Fungal sp. (strain ATCC 74256) protein is O-methyltransferase phiE.